We begin with the raw amino-acid sequence, 308 residues long: Protease HtpX homolog (308 aa).

The next 2 helical transmembrane spans lie at 16–36 (LLSL…IYAV) and 39–59 (YLFG…VLMM). A Zn(2+)-binding site is contributed by histidine 149. Glutamate 150 is a catalytic residue. Histidine 153 is a binding site for Zn(2+). 2 consecutive transmembrane segments (helical) span residues 161–181 (VIMA…TTLF) and 192–212 (IILA…VLSV). Position 217 (glutamate 217) interacts with Zn(2+).

It belongs to the peptidase M48B family. Zn(2+) serves as cofactor.

Its subcellular location is the cell membrane. The chain is Protease HtpX homolog from Thermoplasma volcanium (strain ATCC 51530 / DSM 4299 / JCM 9571 / NBRC 15438 / GSS1).